The sequence spans 362 residues: Heat-inducible transcription repressor HrcA (362 aa).

Belongs to the HrcA family.

Functionally, negative regulator of class I heat shock genes (grpE-dnaK-dnaJ and groELS operons). Prevents heat-shock induction of these operons. The polypeptide is Heat-inducible transcription repressor HrcA (Bradyrhizobium sp. (strain BTAi1 / ATCC BAA-1182)).